The following is a 203-amino-acid chain: Small ribosomal subunit protein uS4 (203 aa).

In terms of domain architecture, S4 RNA-binding spans 93 to 156 (RRLDNVVYRL…MKVPAILEAV (64 aa)).

It belongs to the universal ribosomal protein uS4 family. Part of the 30S ribosomal subunit. Contacts protein S5. The interaction surface between S4 and S5 is involved in control of translational fidelity.

Functionally, one of the primary rRNA binding proteins, it binds directly to 16S rRNA where it nucleates assembly of the body of the 30S subunit. With S5 and S12 plays an important role in translational accuracy. The polypeptide is Small ribosomal subunit protein uS4 (Streptococcus pyogenes serotype M49 (strain NZ131)).